We begin with the raw amino-acid sequence, 22 residues long: Sex pheromone inhibitor determinant (22 aa).

A propeptide spanning residues 1 to 14 (MSKRAMKKIIPLIT) is cleaved from the precursor.

It localises to the secreted. Acts as a competitive inhibitor of the CAD1 pheromone. The protein is Sex pheromone inhibitor determinant (iad) of Enterococcus faecalis (strain ATCC 700802 / V583).